Reading from the N-terminus, the 179-residue chain is Ribosome-recycling factor (179 aa).

Belongs to the RRF family.

It localises to the cytoplasm. Its function is as follows. Responsible for the release of ribosomes from messenger RNA at the termination of protein biosynthesis. May increase the efficiency of translation by recycling ribosomes from one round of translation to another. The protein is Ribosome-recycling factor of Chlamydia trachomatis serovar A (strain ATCC VR-571B / DSM 19440 / HAR-13).